The sequence spans 194 residues: 5-formyltetrahydrofolate cyclo-ligase (194 aa).

Residues 6-10 (KSQLR), 139-146 (GRGAGFYD), and Asp177 each bind ATP.

This sequence belongs to the 5-formyltetrahydrofolate cyclo-ligase family.

The catalysed reaction is (6S)-5-formyl-5,6,7,8-tetrahydrofolate + ATP = (6R)-5,10-methenyltetrahydrofolate + ADP + phosphate. The protein operates within one-carbon metabolism; tetrahydrofolate interconversion. Its function is as follows. Involved in the removal of 5-formyltetrahydrofolate. In vitro, it is a potent inhibitor of various folate-dependent enzymes in the C1 metabolism network and in vivo it might function as a folate storage. 5-formyltetrahydrofolate is also used as an antifolate rescue agent in cancer chemotherapy. Catalyzes the irreversible ATP-dependent transformation of 5-formyltetrahydrofolate (5-CHO-THF) to form 5,10-methenyltetrahydrofolate (5,10-CH=THF). The reverse reaction is catalyzed by the serine hydroxymethyltransferase GlyA (SHMT). The polypeptide is 5-formyltetrahydrofolate cyclo-ligase (Mycolicibacterium smegmatis (strain ATCC 700084 / mc(2)155) (Mycobacterium smegmatis)).